A 139-amino-acid polypeptide reads, in one-letter code: Nucleoside diphosphate kinase (139 aa).

Lysine 10, phenylalanine 58, arginine 86, threonine 92, arginine 104, and asparagine 114 together coordinate ATP. The active-site Pros-phosphohistidine intermediate is histidine 117.

Belongs to the NDK family. As to quaternary structure, homotetramer. It depends on Mg(2+) as a cofactor.

It is found in the cytoplasm. It catalyses the reaction a 2'-deoxyribonucleoside 5'-diphosphate + ATP = a 2'-deoxyribonucleoside 5'-triphosphate + ADP. The enzyme catalyses a ribonucleoside 5'-diphosphate + ATP = a ribonucleoside 5'-triphosphate + ADP. In terms of biological role, major role in the synthesis of nucleoside triphosphates other than ATP. The ATP gamma phosphate is transferred to the NDP beta phosphate via a ping-pong mechanism, using a phosphorylated active-site intermediate. This chain is Nucleoside diphosphate kinase, found in Rhodococcus jostii (strain RHA1).